The sequence spans 313 residues: MKLTRRLTLAAFASALALGTAMPAFAADLIAIITPAHDNPFFKAEAVGAEAKAKELGYETLVMTHDDDANKQSEMIDTAIGRGAKAIILDNAGADASVAAVKKAKDAGIPSFLIDREINATGVAVAQIVSNNYQGAQLGAQEFVKLMGEKGNYVELVGKESDTNAGIRSQGYHDVIDDYPEMKSVAKQSANWSQTEAYSKMETILQANPDIKGVISGNDTMAMGAIAALQAAGRKDVIVVGFDGSNDVRDSIKSGGIKATVLQPAYAQAQLAVEQADAYIKNKTTPKEEKQLMDCVLINADNAGKLETFALTN.

Positions 1–26 (MKLTRRLTLAAFASALALGTAMPAFA) are cleaved as a signal peptide. D-apiofuranose contacts are provided by residues asparagine 39, 115–116 (DR), 162–164 (DTN), arginine 168, asparagine 218, aspartate 243, and glutamine 263.

This sequence belongs to the bacterial solute-binding protein 2 family.

The protein localises to the periplasm. Functionally, part of an ABC transporter complex involved in D-apiose import. Binds D-apiose, D-ribose and D-ribulose. The protein is D-apiose import binding protein of Rhizobium etli (strain ATCC 51251 / DSM 11541 / JCM 21823 / NBRC 15573 / CFN 42).